The following is a 568-amino-acid chain: DNA mismatch repair protein MutL (568 aa).

It belongs to the DNA mismatch repair MutL/HexB family.

This protein is involved in the repair of mismatches in DNA. It is required for dam-dependent methyl-directed DNA mismatch repair. May act as a 'molecular matchmaker', a protein that promotes the formation of a stable complex between two or more DNA-binding proteins in an ATP-dependent manner without itself being part of a final effector complex. The sequence is that of DNA mismatch repair protein MutL from Thermosipho africanus (strain TCF52B).